A 197-amino-acid chain; its full sequence is Phosphoheptose isomerase (197 aa).

In terms of domain architecture, SIS spans 36 to 197 (MVNALLNEGK…IDRQLFGSEE (162 aa)). Residue 51–53 (NGG) coordinates substrate. Positions 60 and 64 each coordinate Zn(2+). Substrate-binding positions include Glu-64, 93-94 (ND), 119-121 (STS), Ser-124, and Gln-174. Residues Gln-174 and His-182 each coordinate Zn(2+).

The protein belongs to the SIS family. GmhA subfamily. Homotetramer. It depends on Zn(2+) as a cofactor.

It localises to the cytoplasm. The catalysed reaction is 2 D-sedoheptulose 7-phosphate = D-glycero-alpha-D-manno-heptose 7-phosphate + D-glycero-beta-D-manno-heptose 7-phosphate. Its pathway is carbohydrate biosynthesis; D-glycero-D-manno-heptose 7-phosphate biosynthesis; D-glycero-alpha-D-manno-heptose 7-phosphate and D-glycero-beta-D-manno-heptose 7-phosphate from sedoheptulose 7-phosphate: step 1/1. Catalyzes the isomerization of sedoheptulose 7-phosphate in D-glycero-D-manno-heptose 7-phosphate. The chain is Phosphoheptose isomerase from Pseudomonas aeruginosa (strain LESB58).